Here is a 298-residue protein sequence, read N- to C-terminus: Lipoyl synthase (298 aa).

7 residues coordinate [4Fe-4S] cluster: cysteine 43, cysteine 48, cysteine 54, cysteine 69, cysteine 73, cysteine 76, and serine 280. Positions 55-269 (FSSGTATFLI…AACGRGMGIP (215 aa)) constitute a Radical SAM core domain.

Belongs to the radical SAM superfamily. Lipoyl synthase family. Requires [4Fe-4S] cluster as cofactor.

Its subcellular location is the cytoplasm. The catalysed reaction is [[Fe-S] cluster scaffold protein carrying a second [4Fe-4S](2+) cluster] + N(6)-octanoyl-L-lysyl-[protein] + 2 oxidized [2Fe-2S]-[ferredoxin] + 2 S-adenosyl-L-methionine + 4 H(+) = [[Fe-S] cluster scaffold protein] + N(6)-[(R)-dihydrolipoyl]-L-lysyl-[protein] + 4 Fe(3+) + 2 hydrogen sulfide + 2 5'-deoxyadenosine + 2 L-methionine + 2 reduced [2Fe-2S]-[ferredoxin]. Its pathway is protein modification; protein lipoylation via endogenous pathway; protein N(6)-(lipoyl)lysine from octanoyl-[acyl-carrier-protein]: step 2/2. Its function is as follows. Catalyzes the radical-mediated insertion of two sulfur atoms into the C-6 and C-8 positions of the octanoyl moiety bound to the lipoyl domains of lipoate-dependent enzymes, thereby converting the octanoylated domains into lipoylated derivatives. This Nitratidesulfovibrio vulgaris (strain ATCC 29579 / DSM 644 / CCUG 34227 / NCIMB 8303 / VKM B-1760 / Hildenborough) (Desulfovibrio vulgaris) protein is Lipoyl synthase.